The chain runs to 1486 residues: MIERGKFRSLTLINWNGFFARTFDLDELVTTLSGGNGAGKSTTMAAFVTALIPDLTLLHFRNTTEAGATSGSRDKGLHGKLKAGVCYSMLDTINSRHQRVVVGVRLQQVAGRDRKVDIKPFAIQGLPMSVQPTQLVTETLNERQARVLPLNELKDKLEAMEGVQFKQFNSITDYHSLMFDLGIIARRLRSASDRSKFYRLIEASLYGGISSAITRSLRDYLLPENSGVRKAFQDMEAALRENRMTLEAIRVTQSDRDLFKHLISEATNYVAADYMRHANERRVHLDKALEFRRELHTSRQQLAAEQYKHVDMARELAEHNGAEGDLEADYQAASDHLNLVQTALRQQEKIERYEADLDELQIRLEEQNEVVAEAIERQQENEARAEAAELEVDELKSQLADYQQALDVQQTRAIQYNQAIAALNRAKELCHLPDLTADCAAEWLETFQAKELEATEKMLSLEQKMSMAQTAHSQFEQAYQLVVAINGPLARNEAWDVARELLREGVDQRHLAEQVQPLRMRLSELEQRLREQQEAERLLADFCKRQGKNFDIDELEALHQELEARIASLSDSVSNAREERMALRQEQEQLQSRIQSLMQRAPVWLAAQNSLNQLSEQCGEEFTSSQDVTEYLQQLLEREREAIVERDEVGARKNAVDEEIERLSQPGGSEDQRLNALAERFGGVLLSEIYDDVSLEDAPYFSALYGPSRHAIVVPDLSQVTEHLEGLTDCPEDLYLIEGDPQSFDDSVFSVDELEKAVVVKIADRQWRYSRFPEVPLFGRAARESRIESLHAEREVLSERFATLSFDVQKTQRLHQAFSRFIGSHLAVAFESDPEAEIRQLNSRRVELERALSNHENDNQQQRIQFEQAKEGVTALNRILPRLNLLADDSLADRVDEIRERLDEAQEAARFVQQFGNQLAKLEPIVSVLQSDPEQFEQLKEDYAYSQQMQRDARQQAFALTEVVQRRAHFSYSDSAEMLSGNSDLNEKLRERLEQAEAERTRAREALRGHAAQLSQYNQVLASLKSSYDTKKELLNDLQRELQDIGVRADSGAEERARIRRDELHAQLSNNRSRRNQLEKALTFCEAEMDNLTRKLRKLERDYFEMREQVVTAKAGWCAVMRMVKDNGVERRLHRRELAYLSADDLRSMSDKALGALRLAVADNEHLRDVLRMSEDPKRPERKIQFFVAVYQHLRERIRQDIIRTDDPVEAIEQMEIELSRLTEELTSREQKLAISSRSVANIIRKTIQREQNRIRMLNQGLQNVSFGQVNSVRLNVNVRETHAMLLDVLSEQHEQHQDLFNSNRLTFSEALAKLYQRLNPQIDMGQRTPQTIGEELLDYRNYLEMEVEVNRGSDGWLRAESGALSTGEAIGTGMSILVMVVQSWEDESRRLRGKDISPCRLLFLDEAARLDARSIATLFELCERLQMQLIIAAPENISPEKGTTYKLVRKVFQNTEHVHVVGLRGFAPQLPETLPGTDEAPSQAS.

34–41 (GGNGAGKS) contributes to the ATP binding site. Coiled-coil stretches lie at residues 326–418 (LEAD…QYNQ), 444–480 (LETF…QAYQ), and 509–603 (RHLA…RAPV). A flexible hinge region spans residues 666 to 783 (PGGSEDQRLN…EVPLFGRAAR (118 aa)). Coiled coils occupy residues 835-923 (EAEI…AKLE), 977-1115 (EMLS…TAKA), and 1209-1266 (VEAI…QNVS).

Belongs to the SMC family. MukB subfamily. Homodimerization via its hinge domain. Binds to DNA via its C-terminal region. Interacts, and probably forms a ternary complex, with MukE and MukF via its C-terminal region. The complex formation is stimulated by calcium or magnesium. Interacts with tubulin-related protein FtsZ.

The protein resides in the cytoplasm. The protein localises to the nucleoid. Functionally, plays a central role in chromosome condensation, segregation and cell cycle progression. Functions as a homodimer, which is essential for chromosome partition. Involved in negative DNA supercoiling in vivo, and by this means organize and compact chromosomes. May achieve or facilitate chromosome segregation by condensation DNA from both sides of a centrally located replisome during cell division. The chain is Chromosome partition protein MukB from Escherichia coli (strain K12 / MC4100 / BW2952).